The primary structure comprises 100 residues: Large ribosomal subunit protein eL21 (100 aa).

Belongs to the eukaryotic ribosomal protein eL21 family.

This Pyrobaculum arsenaticum (strain DSM 13514 / JCM 11321 / PZ6) protein is Large ribosomal subunit protein eL21.